A 298-amino-acid polypeptide reads, in one-letter code: MQDLSAVKAFHALCQHKSLTAAAKALEQPKSTLSRRLAQLEEDLGQSLLMRQGNRLTLTKAGEVFAVYSEQLLELANKSQEALQELNNQVTGELTLVVHPNLIRGWLSQVLDEFMQQHSTLKIRLLSQFQHSDEVFEPDLIIWIEHAAPMGYRKERLGYWRYAAYASPKYLAHRDKPTHPRELIHHPWIDFIACRRAELELHHPEFGSYSLPALESRLQSDNLAMQADAIAKGRGIGLLPTWFANGFETAHPGSLIPCVNGWQSQPTEINCFYPLGRHPLRLRLFIDALRQARPDEWQ.

Positions 1 to 59 (MQDLSAVKAFHALCQHKSLTAAAKALEQPKSTLSRRLAQLEEDLGQSLLMRQGNRLTLT) constitute an HTH lysR-type domain. Residues 19–38 (LTAAAKALEQPKSTLSRRLA) constitute a DNA-binding region (H-T-H motif).

Belongs to the LysR transcriptional regulatory family.

Its function is as follows. Transcription activation of the irgA gene. In the presence of sufficient iron, transcription of both irgA and irgB is negatively regulated by a fur-like protein. In low iron conditions, negative regulation of transcription is removed, and production of irgB leads to positive transcriptional activation of irgA. The polypeptide is Iron-regulated virulence regulatory protein IrgB (irgB) (Vibrio cholerae serotype O1 (strain ATCC 39315 / El Tor Inaba N16961)).